A 412-amino-acid chain; its full sequence is Divalent metal cation transporter MntH (412 aa).

The next 11 helical transmembrane spans lie at 19–39, 46–66, 94–114, 122–142, 156–176, 196–216, 241–261, 290–310, 329–349, 350–370, and 389–409; these read LALM…GNFA, ASFG…AMLI, VWFY…AEFI, LILG…TFLI, VIGG…IFSQ, AVFL…IYLH, IAMT…AAAF, VFGL…TLAG, TITM…TRIL, VMSQ…LLIF, and IGWM…VGTA.

It belongs to the NRAMP family.

The protein localises to the cell inner membrane. In terms of biological role, h(+)-stimulated, divalent metal cation uptake system. The protein is Divalent metal cation transporter MntH of Citrobacter koseri (strain ATCC BAA-895 / CDC 4225-83 / SGSC4696).